The following is a 90-amino-acid chain: MAHKKAGGSSRNGRDSAGKRLGIKAYGGEYVIPGNIIARQRGTTWHPGLNVGMGTDHTLFAKVEGRVEFRAKANGRTFVSVLPIAAEAAE.

It belongs to the bacterial ribosomal protein bL27 family.

The chain is Large ribosomal subunit protein bL27 from Rhodopseudomonas palustris (strain BisB5).